The chain runs to 608 residues: uncharacterized protein (608 aa).

An N-terminal signal peptide occupies residues Met-1–Ser-38. At Gly-39–Gly-563 the chain is on the extracellular side. An N-linked (GlcNAc...) asparagine glycan is attached at Asn-337. Residues Leu-564–Phe-584 traverse the membrane as a helical segment. Over Lys-585 to Val-608 the chain is Cytoplasmic.

It localises to the membrane. This is an uncharacterized protein from Xenopus tropicalis (Western clawed frog).